The primary structure comprises 208 residues: Uracil phosphoribosyltransferase (208 aa).

Residues Arg-78, Arg-103, and 130–138 each bind 5-phospho-alpha-D-ribose 1-diphosphate; that span reads DPMLATGGS. Uracil is bound by residues Ile-193 and 198–200; that span reads GDA. Residue Asp-199 coordinates 5-phospho-alpha-D-ribose 1-diphosphate.

Belongs to the UPRTase family. Mg(2+) is required as a cofactor.

The catalysed reaction is UMP + diphosphate = 5-phospho-alpha-D-ribose 1-diphosphate + uracil. The protein operates within pyrimidine metabolism; UMP biosynthesis via salvage pathway; UMP from uracil: step 1/1. Allosterically activated by GTP. Catalyzes the conversion of uracil and 5-phospho-alpha-D-ribose 1-diphosphate (PRPP) to UMP and diphosphate. This chain is Uracil phosphoribosyltransferase, found in Blochmanniella pennsylvanica (strain BPEN).